The following is a 306-amino-acid chain: Homeobox protein Hox-C13a (306 aa).

The segment at residues 236–295 is a DNA-binding region (homeobox); it reads GRKKRVPYTKIQLKELEKEYAASKFITKDKRRRISATTNLSERQVTIWFQNRRVKEKKFV.

The protein belongs to the Abd-B homeobox family.

It localises to the nucleus. Its function is as follows. Sequence-specific transcription factor which is part of a developmental regulatory system that provides cells with specific positional identities on the anterior-posterior axis. The sequence is that of Homeobox protein Hox-C13a (hoxc13a) from Danio rerio (Zebrafish).